The sequence spans 374 residues: Putative C-&gt;U-editing enzyme APOBEC-4 (374 aa).

Positions Pro-60–Leu-176 constitute a CMP/dCMP-type deaminase domain. His-92 contacts Zn(2+). Glu-94 serves as the catalytic Proton donor. Cys-126 and Cys-133 together coordinate Zn(2+). Residues Glu-259–Arg-280 are disordered.

This sequence belongs to the cytidine and deoxycytidylate deaminase family. Requires Zn(2+) as cofactor. As to expression, predominantly expressed in testis.

Putative C to U editing enzyme whose physiological substrate is not yet known. The chain is Putative C-&gt;U-editing enzyme APOBEC-4 (Apobec4) from Mus musculus (Mouse).